The chain runs to 172 residues: Adenine phosphoribosyltransferase (172 aa).

The protein belongs to the purine/pyrimidine phosphoribosyltransferase family. Homodimer.

The protein resides in the cytoplasm. It catalyses the reaction AMP + diphosphate = 5-phospho-alpha-D-ribose 1-diphosphate + adenine. It participates in purine metabolism; AMP biosynthesis via salvage pathway; AMP from adenine: step 1/1. Catalyzes a salvage reaction resulting in the formation of AMP, that is energically less costly than de novo synthesis. This is Adenine phosphoribosyltransferase from Roseiflexus castenholzii (strain DSM 13941 / HLO8).